The following is a 240-amino-acid chain: 2,3,4,5-tetrahydropyridine-2,6-dicarboxylate N-acetyltransferase (240 aa).

Belongs to the transferase hexapeptide repeat family. DapH subfamily.

The enzyme catalyses (S)-2,3,4,5-tetrahydrodipicolinate + acetyl-CoA + H2O = L-2-acetamido-6-oxoheptanedioate + CoA. It functions in the pathway amino-acid biosynthesis; L-lysine biosynthesis via DAP pathway; LL-2,6-diaminopimelate from (S)-tetrahydrodipicolinate (acetylase route): step 1/3. Functionally, catalyzes the transfer of an acetyl group from acetyl-CoA to tetrahydrodipicolinate. The protein is 2,3,4,5-tetrahydropyridine-2,6-dicarboxylate N-acetyltransferase of Bacillus thuringiensis (strain Al Hakam).